Consider the following 259-residue polypeptide: Bidirectional sugar transporter SWEET4 (259 aa).

At 1–10 the chain is on the extracellular side; it reads MVSPDTIRTA. The 85-residue stretch at 10-94 folds into the MtN3/slv 1 domain; it reads AIGVVGNGTA…TYIALFLAFS (85 aa). A helical transmembrane segment spans residues 11–31; the sequence is IGVVGNGTALVLFLSPVPTFI. Over 32-44 the chain is Cytoplasmic; it reads RIWKKGSVEQYSA. A helical membrane pass occupies residues 45–65; that stretch reads VPYVATLLNCMMWVLYGLPAV. The Extracellular segment spans residues 66–77; the sequence is HPHSMLVITING. An N-linked (GlcNAc...) asparagine glycan is attached at Asn76. The helical transmembrane segment at 78 to 98 threads the bilayer; that stretch reads TGMAIELTYIALFLAFSLGAV. Residues 99-101 lie on the Cytoplasmic side of the membrane; the sequence is RRR. The chain crosses the membrane as a helical span at residues 102–122; sequence VLLLLAAEVAFVAAVAALVLN. Over 123–131 the chain is Extracellular; the sequence is LAHTHERRS. The helical transmembrane segment at 132-152 threads the bilayer; sequence MIVGILCVLFGTGMYAAPLSV. The region spanning 133-217 is the MtN3/slv 2 domain; the sequence is IVGILCVLFG…ILYAIYYKST (85 aa). At 153–165 the chain is on the cytoplasmic side; the sequence is MKMVIQTKSVEYM. A helical transmembrane segment spans residues 166-186; sequence PLFLSLASLVNGICWTAYALI. Topologically, residues 187–191 are extracellular; it reads RFDLY. The chain crosses the membrane as a helical span at residues 192–212; sequence ITIPNGLGVMFAVAQLILYAI. The Cytoplasmic portion of the chain corresponds to 213 to 259; that stretch reads YYKSTQQIIEARKRKEADHVAMTDVVVDSAKNNPSSGAAAAAANGRY.

The protein belongs to the SWEET sugar transporter family. In terms of assembly, forms homooligomers and/or heterooligomers.

It localises to the cell membrane. Mediates both low-affinity uptake and efflux of sugar across the plasma membrane. The polypeptide is Bidirectional sugar transporter SWEET4 (SWEET4) (Oryza sativa subsp. indica (Rice)).